A 264-amino-acid polypeptide reads, in one-letter code: tRNA (guanine-N(1)-)-methyltransferase (264 aa).

Residues Gly125 and 145 to 150 (LGDFVL) each bind S-adenosyl-L-methionine.

It belongs to the RNA methyltransferase TrmD family. In terms of assembly, homodimer.

It is found in the cytoplasm. It carries out the reaction guanosine(37) in tRNA + S-adenosyl-L-methionine = N(1)-methylguanosine(37) in tRNA + S-adenosyl-L-homocysteine + H(+). Functionally, specifically methylates guanosine-37 in various tRNAs. The polypeptide is tRNA (guanine-N(1)-)-methyltransferase (Burkholderia multivorans (strain ATCC 17616 / 249)).